A 491-amino-acid polypeptide reads, in one-letter code: Cytochrome P450 2F2 (491 aa).

C436 lines the heme pocket.

It belongs to the cytochrome P450 family. It depends on heme as a cofactor. As to expression, club cells in lung and liver.

The protein localises to the endoplasmic reticulum membrane. Its subcellular location is the microsome membrane. Functionally, involved in the regio- and stereoselective transformation of naphthalene to trans-1R-hydroxy-2R-glutathionyl-1,2-dihydronaphthalene in the presence of glutathione and glutathione S-transferases. It specifically catalyzes the production of a very reactive and potentially toxic intermediate, the 2R,2S arene oxide, that is associated with necrosis of the unciliated bronchiolar epithelial cells or club cells in lung. In Mus musculus (Mouse), this protein is Cytochrome P450 2F2 (Cyp2f2).